A 756-amino-acid chain; its full sequence is MASVHESLYFNPMMTNGVVHANVFGIKDWVTPYKMALLVLLSELGRAGSQLDQLERRRLNRLLLPLLQGPDMPLSRLRKAIEECCPNLAGSVHIRLKLIAEGELKDMEQFFDDLSDSFSGTEPEVHKTSVIGLFLRHMILAYNKLSFSQVYKLYTALQQYFLNDEKKCGIDENDMELTNTEELDGKMEKEELDVPLREEEISCSGPLSQKQAEYFLSQQASLLKNDETKALSPVSLQKELNNLLKFNPDFAEAHYLSYLNSLRVHDVFSSTHSLLHYFDRLILTGAESKSNGDEGYGRSLRYAALNLAALHCRFGHYQQAELALQEAIRIAQESNDHVCLQHCLSWLHISEQKIFDSCVLLEHSVNKSLHFGLPYLASLGIQSLVQQRAFAGKAANKLMDALKDSDLLHWKHSLSELIDISIAQKTAIWRLYGRSTMALQQAQTLLSMNSLEAVNVGVQQNNTEAFAVVLCHLAELHAEQGYFAAASEILKHLKERFPPNSQHAQLWMLFDQKIQFERAMNDGRYHIADSLVAGITALNSIEGMYRKAIVLKAQNQMLEAHKLLQKLLIHCQEIKNTEIVISVLLSVAELYWRSSCHTIALPVLLQALAFSREYSLQYLASETVLNLAFSQLILGVPEQVLNILHMAIEPGLAHGAVLDKGCAMFLVAKCQVASTASYSQQKKAEALESAILNLNEAKTYLAKVDCKEQLRDVLYFQARLFHTLGKTQERNKCAMLFRQLHQELPAHGVPLINAFK.

4 TPR repeats span residues 301–334 (RYAA…AQES), 522–555 (DGRY…KAQN), 581–614 (ISVL…SREY), and 678–711 (YSQQ…EQLR).

Belongs to the APC5 family. The APC/C is composed of at least 12 subunits.

Its subcellular location is the nucleus. The protein resides in the cytoplasm. The protein localises to the cytoskeleton. It is found in the spindle. The protein operates within protein modification; protein ubiquitination. Component of the anaphase promoting complex/cyclosome (APC/C), a cell cycle-regulated E3 ubiquitin ligase that controls progression through mitosis and the G1 phase of the cell cycle. The APC/C complex acts by mediating ubiquitination and subsequent degradation of target proteins: it mainly mediates the formation of 'Lys-11'-linked polyubiquitin chains and, to a lower extent, the formation of 'Lys-48'- and 'Lys-63'-linked polyubiquitin chains. The APC/C complex catalyzes assembly of branched 'Lys-11'-/'Lys-48'-linked branched ubiquitin chains on target proteins. The sequence is that of Anaphase-promoting complex subunit 5 (ANAPC5) from Gallus gallus (Chicken).